The chain runs to 224 residues: PKHD-type hydroxylase KPN78578_12210 (224 aa).

A Fe2OG dioxygenase domain is found at 77-176 (TISAPLFNRY…RQASFLWIQS (100 aa)). 3 residues coordinate Fe cation: His95, Asp97, and His157. Arg167 provides a ligand contact to 2-oxoglutarate.

Fe(2+) is required as a cofactor. It depends on L-ascorbate as a cofactor.

This Klebsiella pneumoniae subsp. pneumoniae (strain ATCC 700721 / MGH 78578) protein is PKHD-type hydroxylase KPN78578_12210.